Consider the following 372-residue polypeptide: Phospho-N-acetylmuramoyl-pentapeptide-transferase (372 aa).

10 helical membrane passes run 21 to 41, 71 to 91, 98 to 118, 134 to 154, 176 to 196, 211 to 231, 251 to 271, 275 to 295, 300 to 320, and 349 to 369; these read SLTL…MIFG, TPTM…LLWA, VWIL…DDWL, YFWL…IATL, MIPF…YFVI, GLAI…AYVS, VIIV…FNAH, VFMG…IAVM, IAFA…MLQV, and QVVA…LMTL.

Belongs to the glycosyltransferase 4 family. MraY subfamily. The cofactor is Mg(2+).

The protein localises to the cell inner membrane. It carries out the reaction UDP-N-acetyl-alpha-D-muramoyl-L-alanyl-gamma-D-glutamyl-meso-2,6-diaminopimeloyl-D-alanyl-D-alanine + di-trans,octa-cis-undecaprenyl phosphate = di-trans,octa-cis-undecaprenyl diphospho-N-acetyl-alpha-D-muramoyl-L-alanyl-D-glutamyl-meso-2,6-diaminopimeloyl-D-alanyl-D-alanine + UMP. It functions in the pathway cell wall biogenesis; peptidoglycan biosynthesis. Functionally, catalyzes the initial step of the lipid cycle reactions in the biosynthesis of the cell wall peptidoglycan: transfers peptidoglycan precursor phospho-MurNAc-pentapeptide from UDP-MurNAc-pentapeptide onto the lipid carrier undecaprenyl phosphate, yielding undecaprenyl-pyrophosphoryl-MurNAc-pentapeptide, known as lipid I. This Psychrobacter arcticus (strain DSM 17307 / VKM B-2377 / 273-4) protein is Phospho-N-acetylmuramoyl-pentapeptide-transferase.